The primary structure comprises 258 residues: Snake venom serine protease 3 (258 aa).

The N-terminal stretch at 1 to 18 (MVLIRVLANLLILQLSYA) is a signal peptide. Residues 19 to 24 (QKSSEL) constitute a propeptide that is removed on maturation. One can recognise a Peptidase S1 domain in the interval 25–249 (VIGGDECNIN…YTDWIQSIIA (225 aa)). Disulfide bonds link Cys31/Cys163, Cys50/Cys66, Cys98/Cys256, Cys142/Cys210, Cys174/Cys189, and Cys200/Cys225. N-linked (GlcNAc...) asparagine glycosylation is present at Asn44. Catalysis depends on His65, which acts as the Charge relay system. Asn103 is a glycosylation site (N-linked (GlcNAc...) asparagine). Catalysis depends on Asp110, which acts as the Charge relay system. 3 N-linked (GlcNAc...) asparagine glycosylation sites follow: Asn117, Asn121, and Asn154. Catalysis depends on Ser204, which acts as the Charge relay system. Asn251 is a glycosylation site (N-linked (GlcNAc...) asparagine).

Belongs to the peptidase S1 family. Snake venom subfamily. Monomer. Expressed by the venom gland.

It localises to the secreted. Functionally, snake venom serine protease that may act in the hemostasis system of the prey. The protein is Snake venom serine protease 3 (TLG3) of Craspedocephalus gramineus (Bamboo pit viper).